The primary structure comprises 1553 residues: Dual oxidase 1 (1553 aa).

Positions Met-1–Ala-21 are cleaved as a signal peptide. The Extracellular portion of the chain corresponds to Arg-22–Gly-596. The segment at Ser-26–Phe-593 is peroxidase-like; mediates peroxidase activity. N-linked (GlcNAc...) asparagine glycosylation is found at Asn-94, Asn-342, Asn-354, and Asn-534. Residues Val-597–Ala-617 traverse the membrane as a helical segment. Residues Gln-618 to His-1046 are Cytoplasmic-facing. 3 consecutive EF-hand domains span residues Pro-815–Gly-850, Ser-851–Ile-886, and Gln-895–Glu-930. The Ca(2+) site is built by Asp-828, Asp-830, Asn-832, Tyr-834, Glu-839, Asp-864, Asp-866, Asn-868, and Glu-875. The interval Tyr-956–Arg-1250 is interaction with TXNDC11. The chain crosses the membrane as a helical span at residues Ile-1047 to Tyr-1067. The Extracellular portion of the chain corresponds to Tyr-1068–Arg-1082. The helical transmembrane segment at Val-1083–Leu-1103 threads the bilayer. One can recognise a Ferric oxidoreductase domain in the interval Arg-1089–Ser-1271. Residues Leu-1104–Thr-1138 lie on the Cytoplasmic side of the membrane. Residues Ala-1139–Ile-1159 form a helical membrane-spanning segment. The Extracellular portion of the chain corresponds to Ser-1160–Gln-1190. Residues Thr-1191–Ala-1211 form a helical membrane-spanning segment. At Ser-1212–His-1228 the chain is on the cytoplasmic side. The helical transmembrane segment at Leu-1229–Pro-1249 threads the bilayer. A topological domain (extracellular) is located at residue Arg-1250. A helical transmembrane segment spans residues Phe-1251–Ser-1271. The FAD-binding FR-type domain occupies Arg-1272–Glu-1378. Over Arg-1272–Phe-1553 the chain is Cytoplasmic.

It in the N-terminal section; belongs to the peroxidase family. As to quaternary structure, interacts with TXNDC11, TPO and CYBA. N-glycosylated. In terms of tissue distribution, specifically expressed in thyroid.

It localises to the apical cell membrane. The catalysed reaction is NADH + O2 + H(+) = H2O2 + NAD(+). It catalyses the reaction NADPH + O2 + H(+) = H2O2 + NADP(+). It functions in the pathway hormone biosynthesis; thyroid hormone biosynthesis. With respect to regulation, the NADPH oxidase activity is calcium-dependent. Peroxidase activity is inhibited by aminobenzohydrazide. Its function is as follows. Generates hydrogen peroxide which is required for the activity of thyroid peroxidase/TPO and lactoperoxidase/LPO. Plays a role in thyroid hormones synthesis and lactoperoxidase-mediated antimicrobial defense at the surface of mucosa. May have its own peroxidase activity through its N-terminal peroxidase-like domain. This is Dual oxidase 1 (DUOX1) from Sus scrofa (Pig).